The sequence spans 146 residues: Aminoglycoside N(6')-acetyltransferase type 1 (146 aa).

An N-acetyltransferase domain is found at 1-146; it reads MIVICDHDNL…RVVFYRKTLG (146 aa). 4 residues coordinate substrate: W21, Y66, E79, and D115. N120 is a binding site for acetyl-CoA. E136 is a substrate binding site.

In terms of assembly, homodimer.

The enzyme catalyses kanamycin B + acetyl-CoA = N(6')-acetylkanamycin B + CoA + H(+). Functionally, catalyzes the transfer of an acetyl group from acetyl-CoA to the 6'-amino group of aminoglycoside molecules conferring resistance to antibiotics containing the purpurosamine ring including amikacin, tobramycin, netilmicin, isepamicin and sisomicin. The polypeptide is Aminoglycoside N(6')-acetyltransferase type 1 (Serratia marcescens).